The chain runs to 343 residues: GTP 3',8-cyclase (343 aa).

The Radical SAM core domain maps to 19–244 (PYGRTISYLR…TDVDDSTGGP (226 aa)). Residue R28 participates in GTP binding. C35 and C39 together coordinate [4Fe-4S] cluster. Y41 is a binding site for S-adenosyl-L-methionine. C42 contributes to the [4Fe-4S] cluster binding site. R77 lines the GTP pocket. G81 contributes to the S-adenosyl-L-methionine binding site. T111 contributes to the GTP binding site. S135 contributes to the S-adenosyl-L-methionine binding site. GTP is bound at residue K171. M205 contacts S-adenosyl-L-methionine. [4Fe-4S] cluster is bound by residues C268 and C271. Residue 273-275 (RVR) participates in GTP binding. C285 contacts [4Fe-4S] cluster.

This sequence belongs to the radical SAM superfamily. MoaA family. Monomer and homodimer. [4Fe-4S] cluster is required as a cofactor.

It catalyses the reaction GTP + AH2 + S-adenosyl-L-methionine = (8S)-3',8-cyclo-7,8-dihydroguanosine 5'-triphosphate + 5'-deoxyadenosine + L-methionine + A + H(+). It participates in cofactor biosynthesis; molybdopterin biosynthesis. Its function is as follows. Catalyzes the cyclization of GTP to (8S)-3',8-cyclo-7,8-dihydroguanosine 5'-triphosphate. The polypeptide is GTP 3',8-cyclase (Nitrobacter hamburgensis (strain DSM 10229 / NCIMB 13809 / X14)).